We begin with the raw amino-acid sequence, 149 residues long: Large ribosomal subunit protein bL9 (149 aa).

The protein belongs to the bacterial ribosomal protein bL9 family.

Its function is as follows. Binds to the 23S rRNA. In Thiobacillus denitrificans (strain ATCC 25259 / T1), this protein is Large ribosomal subunit protein bL9.